The sequence spans 476 residues: 4-(hydroxymethyl)benzenesulfonate dehydrogenase TsaD1 (476 aa).

NAD(+)-binding positions include 154–155 (WN), 178–181 (KAAE), and 230–231 (GS). The active-site Proton acceptor is E252. L253 lines the NAD(+) pocket. Catalysis depends on C286, which acts as the Nucleophile. E380 lines the NAD(+) pocket.

This sequence belongs to the aldehyde dehydrogenase family. As to quaternary structure, homodimer.

The enzyme catalyses 4-(hydroxymethyl)benzenesulfonate + NAD(+) = 4-formylbenzenesulfonate + NADH + H(+). Functionally, involved in the toluene-4-sulfonate degradation pathway. Does not discriminate between the sulfonate and the carboxyl substituents and can also be involved in the p-toluenecarboxylate degradation pathway. This Comamonas testosteroni (Pseudomonas testosteroni) protein is 4-(hydroxymethyl)benzenesulfonate dehydrogenase TsaD1 (tsaD1).